The primary structure comprises 443 residues: Thymidine phosphorylase (443 aa).

This sequence belongs to the thymidine/pyrimidine-nucleoside phosphorylase family. In terms of assembly, homodimer.

The catalysed reaction is thymidine + phosphate = 2-deoxy-alpha-D-ribose 1-phosphate + thymine. Its pathway is pyrimidine metabolism; dTMP biosynthesis via salvage pathway; dTMP from thymine: step 1/2. In terms of biological role, the enzymes which catalyze the reversible phosphorolysis of pyrimidine nucleosides are involved in the degradation of these compounds and in their utilization as carbon and energy sources, or in the rescue of pyrimidine bases for nucleotide synthesis. In Aliivibrio fischeri (strain ATCC 700601 / ES114) (Vibrio fischeri), this protein is Thymidine phosphorylase.